Here is a 698-residue protein sequence, read N- to C-terminus: Elongation factor G (698 aa).

Positions glutamate 8 to threonine 290 constitute a tr-type G domain. Residues alanine 17–threonine 24, aspartate 88–histidine 92, and asparagine 142–aspartate 145 contribute to the GTP site.

Belongs to the TRAFAC class translation factor GTPase superfamily. Classic translation factor GTPase family. EF-G/EF-2 subfamily.

The protein resides in the cytoplasm. Functionally, catalyzes the GTP-dependent ribosomal translocation step during translation elongation. During this step, the ribosome changes from the pre-translocational (PRE) to the post-translocational (POST) state as the newly formed A-site-bound peptidyl-tRNA and P-site-bound deacylated tRNA move to the P and E sites, respectively. Catalyzes the coordinated movement of the two tRNA molecules, the mRNA and conformational changes in the ribosome. This is Elongation factor G from Chromobacterium violaceum (strain ATCC 12472 / DSM 30191 / JCM 1249 / CCUG 213 / NBRC 12614 / NCIMB 9131 / NCTC 9757 / MK).